Here is an 890-residue protein sequence, read N- to C-terminus: Leucine--tRNA ligase (890 aa).

The 'HIGH' region signature appears at P48–H58. The 'KMSKS' region signature appears at K645–S649. K648 contacts ATP.

The protein belongs to the class-I aminoacyl-tRNA synthetase family.

The protein localises to the cytoplasm. It carries out the reaction tRNA(Leu) + L-leucine + ATP = L-leucyl-tRNA(Leu) + AMP + diphosphate. The chain is Leucine--tRNA ligase from Polynucleobacter necessarius subsp. necessarius (strain STIR1).